A 129-amino-acid chain; its full sequence is MSGRGKQGGKARAKAKSRSSRAGLQFPVGRVHRLLRKGNYAERVGAGAPVYMAAVLEYLTAEILELAGNAARDNKKTRIIPRHLQLAIRNDEELNKLLGKVTIAQGGVLPNIQAVLLPKKTESHKAKSK.

The tract at residues 1 to 22 is disordered; sequence MSGRGKQGGKARAKAKSRSSRA. Serine 2 bears the N-acetylserine mark. The residue at position 2 (serine 2) is a Phosphoserine; by RPS6KA5. A Citrulline; alternate modification is found at arginine 4. Arginine 4 is subject to Symmetric dimethylarginine; by PRMT5; alternate. Lysine 6 and lysine 10 each carry N6-(2-hydroxyisobutyryl)lysine; alternate. Lysine 6 is subject to N6-acetyllysine; alternate. A compositionally biased stretch (basic residues) spans 7-19; that stretch reads QGGKARAKAKSRS. Lysine 10 bears the N6-lactoyllysine; alternate mark. The residue at position 10 (lysine 10) is an N6-succinyllysine; alternate. Glycyl lysine isopeptide (Lys-Gly) (interchain with G-Cter in ubiquitin) cross-links involve residues lysine 14 and lysine 16. An N6-(2-hydroxyisobutyryl)lysine; alternate modification is found at lysine 37. The residue at position 37 (lysine 37) is an N6-(beta-hydroxybutyryl)lysine; alternate. Lysine 37 carries the post-translational modification N6-crotonyllysine; alternate. Lysine 75 and lysine 76 each carry N6-(2-hydroxyisobutyryl)lysine. Lysine 96 carries the N6-(2-hydroxyisobutyryl)lysine; alternate modification. At lysine 96 the chain carries N6-succinyllysine; alternate. Lysine 96 is modified (N6-glutaryllysine; alternate). Lysine 100 carries the N6-glutaryllysine modification. Glutamine 105 is subject to N5-methylglutamine. N6-(2-hydroxyisobutyryl)lysine; alternate is present on lysine 119. N6-crotonyllysine; alternate is present on residues lysine 119 and lysine 120. 2 positions are modified to N6-glutaryllysine; alternate: lysine 119 and lysine 120. Lysine 120 participates in a covalent cross-link: Glycyl lysine isopeptide (Lys-Gly) (interchain with G-Cter in ubiquitin); alternate. Threonine 121 is subject to Phosphothreonine; by DCAF1. Serine 123 is modified (phosphoserine). Lysine 125 bears the N6-crotonyllysine mark.

The protein belongs to the histone H2A family. As to quaternary structure, the nucleosome is a histone octamer containing two molecules each of H2A, H2B, H3 and H4 assembled in one H3-H4 heterotetramer and two H2A-H2B heterodimers. The octamer wraps approximately 147 bp of DNA. Deiminated on Arg-4 in granulocytes upon calcium entry. Post-translationally, monoubiquitination of Lys-120 (H2AK119Ub) by RING1, TRIM37 and RNF2/RING2 complex gives a specific tag for epigenetic transcriptional repression and participates in X chromosome inactivation of female mammals. It is involved in the initiation of both imprinted and random X inactivation. Ubiquitinated H2A is enriched in inactive X chromosome chromatin. Ubiquitination of H2A functions downstream of methylation of 'Lys-27' of histone H3 (H3K27me). H2AK119Ub by RNF2/RING2 can also be induced by ultraviolet and may be involved in DNA repair. Following DNA double-strand breaks (DSBs), it is ubiquitinated through 'Lys-63' linkage of ubiquitin moieties by the E2 ligase UBE2N and the E3 ligases RNF8 and RNF168, leading to the recruitment of repair proteins to sites of DNA damage. Ubiquitination at Lys-14 and Lys-16 (H2AK13Ub and H2AK15Ub, respectively) in response to DNA damage is initiated by RNF168 that mediates monoubiquitination at these 2 sites, and 'Lys-63'-linked ubiquitin are then conjugated to monoubiquitin; RNF8 is able to extend 'Lys-63'-linked ubiquitin chains in vitro. H2AK119Ub and ionizing radiation-induced 'Lys-63'-linked ubiquitination (H2AK13Ub and H2AK15Ub) are distinct events. In terms of processing, phosphorylation on Ser-2 (H2AS1ph) is enhanced during mitosis. Phosphorylation on Ser-2 by RPS6KA5/MSK1 directly represses transcription. Acetylation of H3 inhibits Ser-2 phosphorylation by RPS6KA5/MSK1. Phosphorylation at Thr-121 (H2AT120ph) by DCAF1 is present in the regulatory region of many tumor suppresor genes and down-regulates their transcription. Symmetric dimethylation on Arg-4 by the PRDM1/PRMT5 complex may play a crucial role in the germ-cell lineage. Post-translationally, glutamine methylation at Gln-105 (H2AQ104me) by FBL is specifically dedicated to polymerase I. It is present at 35S ribosomal DNA locus and impairs binding of the FACT complex. In terms of processing, crotonylation (Kcr) is specifically present in male germ cells and marks testis-specific genes in post-meiotic cells, including X-linked genes that escape sex chromosome inactivation in haploid cells. Crotonylation marks active promoters and enhancers and confers resistance to transcriptional repressors. It is also associated with post-meiotically activated genes on autosomes. Lactylated in macrophages by EP300/P300 by using lactoyl-CoA directly derived from endogenous or exogenous lactate, leading to stimulates gene transcription.

It is found in the nucleus. Its subcellular location is the chromosome. Its function is as follows. Core component of nucleosome. Nucleosomes wrap and compact DNA into chromatin, limiting DNA accessibility to the cellular machineries which require DNA as a template. Histones thereby play a central role in transcription regulation, DNA repair, DNA replication and chromosomal stability. DNA accessibility is regulated via a complex set of post-translational modifications of histones, also called histone code, and nucleosome remodeling. The sequence is that of Histone H2A type 2-C from Bos taurus (Bovine).